The following is a 238-amino-acid chain: Adenylate dimethylallyltransferase (238 aa).

The protein belongs to the isopentenyl transferase family.

The enzyme catalyses dimethylallyl diphosphate + AMP = N(6)-(dimethylallyl)adenosine 5'-phosphate + diphosphate. Functionally, transfers dimethylallyl groups to AMP as part of the biosynthesis of cytokinin phytohormones. This Ralstonia solanacearum (Pseudomonas solanacearum) protein is Adenylate dimethylallyltransferase (tzs).